The chain runs to 390 residues: Methylthioribose-1-phosphate isomerase (390 aa).

Residues 53–55 (RGA), R90, and Q207 each bind substrate. The active-site Proton donor is the D248. A substrate-binding site is contributed by 258 to 259 (NK).

Belongs to the EIF-2B alpha/beta/delta subunits family. MtnA subfamily.

It carries out the reaction 5-(methylsulfanyl)-alpha-D-ribose 1-phosphate = 5-(methylsulfanyl)-D-ribulose 1-phosphate. The enzyme catalyses 5-deoxy-alpha-D-ribose 1-phosphate = 5-deoxy-D-ribulose 1-phosphate. It functions in the pathway amino-acid biosynthesis; L-methionine biosynthesis via salvage pathway; L-methionine from S-methyl-5-thio-alpha-D-ribose 1-phosphate: step 1/6. In terms of biological role, catalyzes the interconversion of methylthioribose-1-phosphate (MTR-1-P) into methylthioribulose-1-phosphate (MTRu-1-P). Also catalyzes the interconversion of 5-deoxyribose 1-phosphate and 5-deoxyribulose 1-phosphate. Part of a bifunctional DHAP-shunt salvage pathway for SAM by-products. The polypeptide is Methylthioribose-1-phosphate isomerase (Rhodospirillum rubrum (strain ATCC 11170 / ATH 1.1.1 / DSM 467 / LMG 4362 / NCIMB 8255 / S1)).